Here is a 642-residue protein sequence, read N- to C-terminus: 4-hydroxy-3-methylbut-2-enyl diphosphate reductase (642 aa).

Residues 1–282 are 4-hydroxy-3-methylbut-2-enyl diphosphate reductase; it reads MRKVMLAEKA…EEAISKMSEN (282 aa). [4Fe-4S] cluster is bound at residue cysteine 13. (2E)-4-hydroxy-3-methylbut-2-enyl diphosphate is bound by residues histidine 42 and histidine 77. Dimethylallyl diphosphate-binding residues include histidine 42 and histidine 77. Histidine 42 and histidine 77 together coordinate isopentenyl diphosphate. [4Fe-4S] cluster is bound at residue cysteine 99. Histidine 127 serves as a coordination point for (2E)-4-hydroxy-3-methylbut-2-enyl diphosphate. A dimethylallyl diphosphate-binding site is contributed by histidine 127. Isopentenyl diphosphate is bound at residue histidine 127. Catalysis depends on glutamate 129, which acts as the Proton donor. Threonine 165 lines the (2E)-4-hydroxy-3-methylbut-2-enyl diphosphate pocket. [4Fe-4S] cluster is bound at residue cysteine 193. Residues serine 221, serine 222, asparagine 223, and serine 266 each coordinate (2E)-4-hydroxy-3-methylbut-2-enyl diphosphate. 4 residues coordinate dimethylallyl diphosphate: serine 221, serine 222, asparagine 223, and serine 266. Positions 221, 222, 223, and 266 each coordinate isopentenyl diphosphate. S1 motif domains lie at 309–377, 484–552, and 569–638; these read GASV…LSVK, GQVV…LSVK, and GSVV…LSIR.

It in the N-terminal section; belongs to the IspH family. [4Fe-4S] cluster is required as a cofactor.

It catalyses the reaction isopentenyl diphosphate + 2 oxidized [2Fe-2S]-[ferredoxin] + H2O = (2E)-4-hydroxy-3-methylbut-2-enyl diphosphate + 2 reduced [2Fe-2S]-[ferredoxin] + 2 H(+). It carries out the reaction dimethylallyl diphosphate + 2 oxidized [2Fe-2S]-[ferredoxin] + H2O = (2E)-4-hydroxy-3-methylbut-2-enyl diphosphate + 2 reduced [2Fe-2S]-[ferredoxin] + 2 H(+). It participates in isoprenoid biosynthesis; dimethylallyl diphosphate biosynthesis; dimethylallyl diphosphate from (2E)-4-hydroxy-3-methylbutenyl diphosphate: step 1/1. The protein operates within isoprenoid biosynthesis; isopentenyl diphosphate biosynthesis via DXP pathway; isopentenyl diphosphate from 1-deoxy-D-xylulose 5-phosphate: step 6/6. In terms of biological role, catalyzes the conversion of 1-hydroxy-2-methyl-2-(E)-butenyl 4-diphosphate (HMBPP) into a mixture of isopentenyl diphosphate (IPP) and dimethylallyl diphosphate (DMAPP). Acts in the terminal step of the DOXP/MEP pathway for isoprenoid precursor biosynthesis. The chain is 4-hydroxy-3-methylbut-2-enyl diphosphate reductase from Clostridium acetobutylicum (strain ATCC 824 / DSM 792 / JCM 1419 / IAM 19013 / LMG 5710 / NBRC 13948 / NRRL B-527 / VKM B-1787 / 2291 / W).